Here is a 764-residue protein sequence, read N- to C-terminus: 5-methyltetrahydropteroyltriglutamate--homocysteine methyltransferase (764 aa).

Residues 16-19 (RELK) and K121 contribute to the 5-methyltetrahydropteroyltri-L-glutamate site. Residues 440–442 (IGS) and E493 contribute to the L-homocysteine site. L-methionine contacts are provided by residues 440–442 (IGS) and E493. 5-methyltetrahydropteroyltri-L-glutamate contacts are provided by residues 524 to 525 (RC) and W570. D608 lines the L-homocysteine pocket. Residue D608 participates in L-methionine binding. E614 contacts 5-methyltetrahydropteroyltri-L-glutamate. Zn(2+) is bound by residues H650, C652, and E674. H703 (proton donor) is an active-site residue. Position 735 (C735) interacts with Zn(2+).

It belongs to the vitamin-B12 independent methionine synthase family. Zn(2+) serves as cofactor.

It catalyses the reaction 5-methyltetrahydropteroyltri-L-glutamate + L-homocysteine = tetrahydropteroyltri-L-glutamate + L-methionine. It participates in amino-acid biosynthesis; L-methionine biosynthesis via de novo pathway; L-methionine from L-homocysteine (MetE route): step 1/1. In terms of biological role, catalyzes the transfer of a methyl group from 5-methyltetrahydrofolate to homocysteine resulting in methionine formation. The protein is 5-methyltetrahydropteroyltriglutamate--homocysteine methyltransferase of Burkholderia orbicola (strain MC0-3).